A 1383-amino-acid polypeptide reads, in one-letter code: DNA-directed RNA polymerase subunit beta'' (1383 aa).

Residues Cys-220, Cys-289, Cys-296, and Cys-299 each coordinate Zn(2+).

It belongs to the RNA polymerase beta' chain family. RpoC2 subfamily. In terms of assembly, in plastids the minimal PEP RNA polymerase catalytic core is composed of four subunits: alpha, beta, beta', and beta''. When a (nuclear-encoded) sigma factor is associated with the core the holoenzyme is formed, which can initiate transcription. The cofactor is Zn(2+).

It is found in the plastid. The protein localises to the chloroplast. It catalyses the reaction RNA(n) + a ribonucleoside 5'-triphosphate = RNA(n+1) + diphosphate. Its function is as follows. DNA-dependent RNA polymerase catalyzes the transcription of DNA into RNA using the four ribonucleoside triphosphates as substrates. The protein is DNA-directed RNA polymerase subunit beta'' of Oenothera parviflora (Small-flowered evening primrose).